The primary structure comprises 522 residues: Cell polarity protein mod5 (522 aa).

5 disordered regions span residues M1 to D83, K119 to N158, R170 to A192, P251 to P285, and Y300 to K516. Polar residues-rich tracts occupy residues P27–S46, L66–S76, and N131–E146. Residue S43 is modified to Phosphoserine. Positions P258–P285 are enriched in low complexity. A Phosphoserine modification is found at S303. Positions K308–K318 are enriched in basic and acidic residues. The span at G335–D349 shows a compositional bias: polar residues. Phosphoserine is present on S350. 2 stretches are compositionally biased toward polar residues: residues N363–N396 and D404–V431. Over residues S439–L452 the composition is skewed to low complexity. Composition is skewed to basic and acidic residues over residues H472–R482 and P495–K516.

Interacts with tea1 and tea3.

The protein localises to the cell membrane. With tea1, acts in a positive-feedback loop in the microtubule-mediated regulation of cell polarity. Involved in the anchoring of tea1 at the cortex as well as the correct localization of tea3. This Schizosaccharomyces pombe (strain 972 / ATCC 24843) (Fission yeast) protein is Cell polarity protein mod5 (mod5).